Consider the following 1392-residue polypeptide: MTMSQTDGVEFASRNTNENGHDDDDQLRSQWVAIERSPTFERITTALFCKRDEKGKKSQRRVMDVSKLDDLDRRLFIDDLIRHVENDNHVLLQKIRKRIDEVGIDLPKIEARFSDLFVEAECEVVYGKPIPTLWNAISSKLSRFMCSNQAKKISILKGVSGIIRPKRMTLLLGPPSCGKTTLLLALSGRLDPSLKTRGDISYNGHLFSEFVPEKTSSYVSQNDLHIPELSVRETLDFSGCFQGTGSRLEMTKEISRREKLKGIVPDPDIDAYMKAASIEGSKTNLQTDYILKILGLTICADTRVGDASRPGISGGQKRRLTTGEMIVGPIKTLFMDEISNGLDSSTTFQILSCLQQFARLSEGTILVSLLQPAPETFELFDDLILMGEGKIIYHGPRDFVCSFFEDCGFKCPNRKSVAEFLQEVISRKDQEQYWCHIEKTYCYVSIESFIEKFKKSDLGLELQDRLSKTYDKSQTQKDGLCFRKYSLSNWDMLKACSRREFLLMKRNSFVYVFKSGLLIFIGFIAMTVYLRTGSTRDSLHANYLMGSLFFSLFKLLADGLPELTLTISRIAVFCKQKELYFYPAWAYAIPSAILKIPISFLESFLWTMLTYYVIGYSPEMGRFIRQFLILFALHLSCISMFRAIAAVFRDFVVATTVGSISIVLLSVFGGFIVRKPSMPSWLEWGFWLSPLSYAEIGLTANEFFAPRWGKITSENRTLGEQVLDARGLNFGNQSYWNAFGALIGFTLFFNTVFALALTFLKTSQRSRVIVSHEKNTQSSENDSKIASRFKNALPFEPLTFTFQDVQYIIETPQGKKLQLLSGVTGAFKPGVLTALMGVSGAGKTTLLDVLSGRKTFGDIKGQIEVGGYVKVQDTFSRVSGYCEQFDIHSPNLTVQESLKYSAWLRLTSNISSETKCAIVNEVLETIELEEIKDSIVGIPGISGLTTEQRKRLTIAVELVSNPSIIFMDEPTTGLDARAAAIVMRAVKNIAETGRTVVCTIHQPSIDIFEAFDELILMKNGGKIIYYGPLGQHSSKVIEYFMRIHGVPKLKENSNPATWILDITSKSSEDKLGVDLAQMYEESTLFKENKMVIEQTRCTSLGSERLILSSRYAQTSWEQFKACLWKQHLSYWRNPSYNLTRIIFMSFTCMLCGILFWQKAKEINNQQDLFNVFGSMFTVVLFSGINNCSTVLFSVATERNVFYRERFSRMYNSWAYSLAQVLVEIPYSLFQSIVYVIIVYPMVGYHWSVFKVFWSFYSIFCTLLIFNYFGMLLVVVTPNVHIAFTLRSSFYAIVNLFAGYVMPKPNIPRWWIWMYYLSPTSWVLNGLLTSQYGDMEKEILAFGEKKKVSDFLEDYFGYRYDSLALVAVVLIAFPILLASLFAFFIGKLNFQKK.

A compositionally biased stretch (polar residues) spans 1 to 18 (MTMSQTDGVEFASRNTNE). The tract at residues 1-26 (MTMSQTDGVEFASRNTNENGHDDDDQ) is disordered. The 275-residue stretch at 139–413 (SKLSRFMCSN…FEDCGFKCPN (275 aa)) folds into the ABC transporter 1 domain. Residue 173-180 (GPPSCGKT) participates in ATP binding. Positions 491–703 (DMLKACSRRE…AEIGLTANEF (213 aa)) constitute an ABC transmembrane type-2 1 domain. Helical transmembrane passes span 509–529 (FVYV…MTVY), 543–563 (YLMG…LPEL), 596–616 (IPIS…VIGY), 627–647 (FLIL…IAAV), 652–672 (VVAT…GGFI), and 739–759 (FGAL…ALTF). One can recognise an ABC transporter 2 domain in the interval 800 to 1045 (FTFQDVQYII…VIEYFMRIHG (246 aa)). 837 to 844 (GVSGAGKT) is a binding site for ATP. Positions 1117–1331 (EQFKACLWKQ…VLNGLLTSQY (215 aa)) constitute an ABC transmembrane type-2 2 domain. 7 helical membrane passes run 1136 to 1156 (YNLT…ILFW), 1175 to 1195 (MFTV…FSVA), 1215 to 1237 (YSLA…YVII), 1255 to 1275 (FYSI…LVVV), 1281 to 1301 (IAFT…GYVM), 1309 to 1329 (WWIW…LLTS), and 1364 to 1384 (LVAV…AFFI).

The protein belongs to the ABC transporter superfamily. ABCG family. PDR (TC 3.A.1.205) subfamily. In terms of tissue distribution, confined to shoots.

It is found in the membrane. May be a general defense protein. This chain is ABC transporter G family member 42 (ABCG42), found in Arabidopsis thaliana (Mouse-ear cress).